Consider the following 96-residue polypeptide: Protein RnfH (96 aa).

It belongs to the UPF0125 (RnfH) family.

The protein is Protein RnfH of Salmonella agona (strain SL483).